The primary structure comprises 336 residues: Isopentenyl-diphosphate delta-isomerase (336 aa).

5–6 contacts substrate; sequence RK. Residues 60-62, S90, and N117 contribute to the FMN site; that span reads AMT. Substrate is bound at residue Q147. Residue E148 participates in Mg(2+) binding. FMN-binding positions include K179, S204, T209, 253 to 255, and 274 to 275; these read GVR and SR.

Belongs to the IPP isomerase type 2 family. Homooctamer. Dimer of tetramers. It depends on FMN as a cofactor. The cofactor is NADPH. Mg(2+) is required as a cofactor.

The protein localises to the cytoplasm. It carries out the reaction isopentenyl diphosphate = dimethylallyl diphosphate. In terms of biological role, involved in the biosynthesis of isoprenoids. Catalyzes the 1,3-allylic rearrangement of the homoallylic substrate isopentenyl (IPP) to its allylic isomer, dimethylallyl diphosphate (DMAPP). In Streptococcus pneumoniae serotype 4 (strain ATCC BAA-334 / TIGR4), this protein is Isopentenyl-diphosphate delta-isomerase.